The primary structure comprises 233 residues: Small ribosomal subunit protein eS4 (233 aa).

The S4 RNA-binding domain maps to 37 to 99 (VPLVVVLRDV…RDEYYRVFPD (63 aa)).

The protein belongs to the eukaryotic ribosomal protein eS4 family.

This is Small ribosomal subunit protein eS4 from Halobacterium salinarum (strain ATCC 29341 / DSM 671 / R1).